A 1036-amino-acid polypeptide reads, in one-letter code: MDNEDKISISAKEEKILSFWKEQDIFQKTLDNREGCPTFSFYDGPPFATGLPHYGHLLAGTIKDVVCRYASMDGHYVPRRFGWDCHGVPVEYEVEKSLGLTEPGAIERFGVANFNEECRKIVFRYADEWKYFVDRIGRWVDFSATWRTMDLSFMESVWWVFRSLYDQGLVYEGTKVVPFSTKLGTPLSNFEAGQNYKEVDDPSVVIKFALQDNQGFLLAWTTTPWTLVSNMALAVHPELTYVRIKDKESGDEYILGQESLPRWFPDRESYEWIGQLSGKSLVGQSYEPLFPYFQDKKELEAFRILPADFIEESEGTGIVHMAPAFGEADFFACQEHNVPLVCPVDNQGCYTAEVKDFVGEYIKSADKGIARRLKNENKLFYQGTVRHRYPFCWRTDSPLIYKAVNSWFVAVEKVKSKMLKANESIHWTPGHIKQGRFGKWLEGARDWAISRNRYWGTPIPIWRSDDGELLVIGSIQELEALSGQKIVDLHRHFIDEIEINQNGKSFRRIPYVFDCWFDSGAMPYAQNHYPFERAEETEACFPADFIAEGLDQTRGWFYTLTVIAAALFDQPAFKNVIVNGIILAEDGNKMSKRLNNYPSPKMIMDAYGADALRLYLLNSVVVKAEDLRFSDKGVESVLKQVLLPLSNALAFYKTYAELYGFDPKETDNIELAEIDCWILSSLYSLVGKTRESMSQYDLHAAVNPFVDFIEDLTNWYIRRSRRRFWDAEDSADRRAAFSTLYEVLVVFSKVIAPFIPFIAEDMYQQLRGETDPESVHLCDFPHVVLEKILPDLERKMQDIREIVALGHSLRKEHKLKVRQPLQNVYIVGSKERMEALAQVGSLIGEELNVKDVHFCSETPEYVTTLIKPNFRTLGKKVGNRLPEIQRALARLPQEQIRAFMHKGQMVVSLGEETISLDKEDITVSWASAEGFVARSSASFVAVLDCQLTEPLIMEGIARELVNKINTMRRNGKLHVSDRIAIRLHAPVIVQEAFALHKEYICEETLTTSVSVIDYKEGEEWDINGHAVSFVLERVER.

Positions Pro46–His56 match the 'HIGH' region motif. The 'KMSKS' region motif lies at Lys589–Arg593. Lys592 is a binding site for ATP.

The protein belongs to the class-I aminoacyl-tRNA synthetase family. IleS type 2 subfamily. In terms of assembly, monomer. Requires Zn(2+) as cofactor.

It localises to the cytoplasm. It carries out the reaction tRNA(Ile) + L-isoleucine + ATP = L-isoleucyl-tRNA(Ile) + AMP + diphosphate. Its function is as follows. Catalyzes the attachment of isoleucine to tRNA(Ile). As IleRS can inadvertently accommodate and process structurally similar amino acids such as valine, to avoid such errors it has two additional distinct tRNA(Ile)-dependent editing activities. One activity is designated as 'pretransfer' editing and involves the hydrolysis of activated Val-AMP. The other activity is designated 'posttransfer' editing and involves deacylation of mischarged Val-tRNA(Ile). This is Isoleucine--tRNA ligase from Chlamydia trachomatis serovar A (strain ATCC VR-571B / DSM 19440 / HAR-13).